We begin with the raw amino-acid sequence, 100 residues long: Urease subunit gamma (100 aa).

This sequence belongs to the urease gamma subunit family. In terms of assembly, heterotrimer of UreA (gamma), UreB (beta) and UreC (alpha) subunits. Three heterotrimers associate to form the active enzyme.

It is found in the cytoplasm. The enzyme catalyses urea + 2 H2O + H(+) = hydrogencarbonate + 2 NH4(+). It participates in nitrogen metabolism; urea degradation; CO(2) and NH(3) from urea (urease route): step 1/1. In Tolumonas auensis (strain DSM 9187 / NBRC 110442 / TA 4), this protein is Urease subunit gamma.